Here is a 434-residue protein sequence, read N- to C-terminus: Alpha-enolase (434 aa).

Residue serine 40 coordinates Mg(2+). Positions 158 and 167 each coordinate substrate. The active-site Proton donor is the glutamate 210. The Mg(2+) site is built by aspartate 245, glutamate 293, and aspartate 318. Substrate is bound by residues glutamate 293 and aspartate 318. Lysine 343 (proton acceptor) is an active-site residue. Substrate contacts are provided by residues 370–373 (SHRS) and lysine 394.

The protein belongs to the enolase family. As to quaternary structure, homodimer. Mg(2+) serves as cofactor.

It localises to the cytoplasm. It catalyses the reaction (2R)-2-phosphoglycerate = phosphoenolpyruvate + H2O. The protein operates within carbohydrate degradation; glycolysis; pyruvate from D-glyceraldehyde 3-phosphate: step 4/5. This chain is Alpha-enolase, found in Sceloporus undulatus (Eastern fence lizard).